Reading from the N-terminus, the 249-residue chain is tRNA pseudouridine synthase A (249 aa).

Asp-54 serves as the catalytic Nucleophile. Tyr-112 lines the substrate pocket.

It belongs to the tRNA pseudouridine synthase TruA family. As to quaternary structure, homodimer.

It carries out the reaction uridine(38/39/40) in tRNA = pseudouridine(38/39/40) in tRNA. Formation of pseudouridine at positions 38, 39 and 40 in the anticodon stem and loop of transfer RNAs. The protein is tRNA pseudouridine synthase A of Latilactobacillus sakei subsp. sakei (strain 23K) (Lactobacillus sakei subsp. sakei).